Consider the following 401-residue polypeptide: Ribosomal protein uS12 methylthiotransferase RimO (401 aa).

An MTTase N-terminal domain is found at 1-108; sequence MKINFINLGC…GIELLQTPKR (108 aa). Residues C10, C43, C72, C124, C128, and C131 each contribute to the [4Fe-4S] cluster site. In terms of domain architecture, Radical SAM core spans 110-339; that stretch reads LTTKHYAYLK…FNLSQEILEE (230 aa).

It belongs to the methylthiotransferase family. RimO subfamily. [4Fe-4S] cluster is required as a cofactor.

It localises to the cytoplasm. The catalysed reaction is L-aspartate(89)-[ribosomal protein uS12]-hydrogen + (sulfur carrier)-SH + AH2 + 2 S-adenosyl-L-methionine = 3-methylsulfanyl-L-aspartate(89)-[ribosomal protein uS12]-hydrogen + (sulfur carrier)-H + 5'-deoxyadenosine + L-methionine + A + S-adenosyl-L-homocysteine + 2 H(+). In terms of biological role, catalyzes the methylthiolation of an aspartic acid residue of ribosomal protein uS12. This Hydrogenobaculum sp. (strain Y04AAS1) protein is Ribosomal protein uS12 methylthiotransferase RimO.